We begin with the raw amino-acid sequence, 213 residues long: NADH-quinone oxidoreductase subunit C (213 aa).

This sequence belongs to the complex I 30 kDa subunit family. As to quaternary structure, NDH-1 is composed of 15 different subunits. Subunits NuoB, C, D, E, F, and G constitute the peripheral sector of the complex.

The protein resides in the cell membrane. It carries out the reaction a quinone + NADH + 5 H(+)(in) = a quinol + NAD(+) + 4 H(+)(out). Functionally, NDH-1 shuttles electrons from NADH, via FMN and iron-sulfur (Fe-S) centers, to quinones in the respiratory chain. The immediate electron acceptor for the enzyme in this species is believed to be a menaquinone. Couples the redox reaction to proton translocation (for every two electrons transferred, four hydrogen ions are translocated across the cytoplasmic membrane), and thus conserves the redox energy in a proton gradient. This chain is NADH-quinone oxidoreductase subunit C, found in Deinococcus geothermalis (strain DSM 11300 / CIP 105573 / AG-3a).